Reading from the N-terminus, the 64-residue chain is Large ribosomal subunit protein bL35 (64 aa).

The span at Met-1–Arg-42 shows a compositional bias: basic residues. The segment at Met-1–Gly-64 is disordered. Positions Thr-48–Ile-58 are enriched in polar residues.

It belongs to the bacterial ribosomal protein bL35 family.

In Mycolicibacterium smegmatis (strain ATCC 700084 / mc(2)155) (Mycobacterium smegmatis), this protein is Large ribosomal subunit protein bL35.